The following is a 240-amino-acid chain: Ribosomal RNA small subunit methyltransferase I (240 aa).

Belongs to the methyltransferase superfamily. RsmI family.

The protein resides in the cytoplasm. It catalyses the reaction cytidine(1402) in 16S rRNA + S-adenosyl-L-methionine = 2'-O-methylcytidine(1402) in 16S rRNA + S-adenosyl-L-homocysteine + H(+). Functionally, catalyzes the 2'-O-methylation of the ribose of cytidine 1402 (C1402) in 16S rRNA. This chain is Ribosomal RNA small subunit methyltransferase I, found in Leptospira biflexa serovar Patoc (strain Patoc 1 / ATCC 23582 / Paris).